We begin with the raw amino-acid sequence, 502 residues long: MNGGLLVAGTTSDAGKSVVTAGICRWLVRQGVKVAPFKAQNMSLNSFVTRDGAEIGRAQAMQAQACRVEPTAHMNPVLLKPGGERSSQVVLLGRPVGEMSARGYHGGRQERLLGTVLDSLAELRGTYDAVICEGAGSPAEINLRRTDIVNMGIARGAGLPVLVVGDIDRGGVFASFFGTVALLAPEDQALVAGFLVNKFRGDVSLLEPGLDMLHGLTGRRTYGVLPFRHGLGIDEEDGLRVSLRGTVRESVVAPPVGEDVLRVAVCAVPLMSNFTDVDALAAEPGVVVRFVDRPEELADADLVIVPGTRGTVRALEWLRERGLADAIARRAAERRPVLGICGGYQLLGEHIEDEVESRAGHVDGLGLLPVRVRFDREKTLTRAVGEALGEPVEGYEIHHGVAEVTGGAPFLDGCRVGRTWGTHWHGSLESDGFRRAFLREVAAAAGRRFVPAPDTSFAALREEQLDRLGDLIEHHADTDALWRLIESGAPQGLPFIPPGAPA.

Positions 260 to 433 (VLRVAVCAVP…WHGSLESDGF (174 aa)) constitute a GATase cobBQ-type domain. The active-site Nucleophile is Cys341. His425 is a catalytic residue.

This sequence belongs to the CobB/CobQ family. CobQ subfamily.

The protein operates within cofactor biosynthesis; adenosylcobalamin biosynthesis. Functionally, catalyzes amidations at positions B, D, E, and G on adenosylcobyrinic A,C-diamide. NH(2) groups are provided by glutamine, and one molecule of ATP is hydrogenolyzed for each amidation. This is Cobyric acid synthase from Streptomyces coelicolor (strain ATCC BAA-471 / A3(2) / M145).